Reading from the N-terminus, the 122-residue chain is Phospholipase A2 crotoxin basic subunit CBd (122 aa).

Disulfide bonds link Cys26-Cys115, Cys28-Cys44, Cys43-Cys95, Cys49-Cys122, Cys50-Cys88, Cys57-Cys81, and Cys75-Cys86. Residues Tyr27, Gly29, and Gly31 each contribute to the Ca(2+) site. The active site involves His47. Asp48 provides a ligand contact to Ca(2+). The active site involves Asp89.

This sequence belongs to the phospholipase A2 family. Group II subfamily. D49 sub-subfamily. In terms of assembly, heterodimer of one of the acidic (CA1, CA2, CA3 or CA4) and one of the basic (CBa1, CBa2, CBb, CBc or CBd) subunits; non-covalently linked. The acidic subunit is non-toxic, without enzymatic activity and comprises 3 peptides that are cross-linked by 5 disulfide bridges. The basic subunit is toxic, has phospholipase A2 activity and is composed of a single chain. Multiple variants of each subunit give different crotoxin complexes that can be subdivided into 2 classes: (1) those of high toxicity, low PLA2 activity (CBb, CBc and CBd linked with high affinity to any CA) and high stability (K(d)=4.5 nM) and (2) those of moderate toxicity, high PLA2 activity (CBa2 linked with low affinity to any CA) and low stability (K(d)=25 nM). Interacts with crotoxin inhibitor from Crotalus serum (CICS); the interaction leads to dissociation of the CA-CB heterodimer and to inhibition of PLA2 activity of the CB subunit. Interacts with human NBD1 domain of CFTR. It depends on Ca(2+) as a cofactor. As to expression, expressed by the venom gland.

It is found in the secreted. The catalysed reaction is a 1,2-diacyl-sn-glycero-3-phosphocholine + H2O = a 1-acyl-sn-glycero-3-phosphocholine + a fatty acid + H(+). Heterodimer CA-CB: Crotoxin is a potent presynaptic neurotoxin that possesses phospholipase A2 (PLA2) activity and exerts a lethal action by blocking neuromuscular transmission. It consists of a non-covalent association of a basic and weakly toxic PLA2 subunit (CBa2, CBb, CBc, or CBd), with a small acidic, non-enzymatic and non-toxic subunit (CA1, CA2, CA3 or CA4). The complex acts by binding to a specific 48-kDa protein (R48) receptor located on presynaptic membranes, forming a transient ternary complex CA-CB-R48, followed by dissociation of the CA-CB complex and release of the CA subunit. At equilibrium, only the CB subunits remain associated with the specific crotoxin receptor. In addition to neurotoxicity, crotoxin has been found to exert myotoxicity, nephrotoxicity, and cardiovascular toxicity. Moreover, anti-inflammatory, immunomodulatory, anti-tumor and analgesic effects of crotoxin have also been reported. In terms of biological role, monomer CBd: The basic subunit of crotoxin is a snake venom phospholipase A2 (PLA2) that exhibits weak neurotoxicity (10-fold less than the heterodimer) and very strong anticoagulant effects by binding to factor Xa (F10) and inhibiting the prothrombinase activity. In addition, it shows the same effects described for the heterodimer and binds the nucleotide-binding domain (NBD1) of CFTR chloride channels and increases the channel current. PLA2 catalyzes the calcium-dependent hydrolysis of the 2-acyl groups in 3-sn-phosphoglycerides. This is Phospholipase A2 crotoxin basic subunit CBd from Crotalus durissus terrificus (South American rattlesnake).